We begin with the raw amino-acid sequence, 1054 residues long: Kinesin-like protein KIN-7G (1054 aa).

The Kinesin motor domain occupies 17–341; sequence KIFVSVRLRP…LLFASCAKEV (325 aa). Position 105 to 112 (105 to 112) interacts with ATP; it reads GQTSSGKT. Coiled coils occupy residues 350–425 and 611–640; these read VMSD…IGEA and TETA…VSSV. Disordered stretches follow at residues 600 to 648 and 740 to 760; these read CEPE…KEKS and ERAE…PKHI. A compositionally biased stretch (acidic residues) spans 613 to 631; sequence TAEEKEEKEETEEKEEEEE.

This sequence belongs to the TRAFAC class myosin-kinesin ATPase superfamily. Kinesin family. KIN-7 subfamily.

The protein is Kinesin-like protein KIN-7G of Arabidopsis thaliana (Mouse-ear cress).